The sequence spans 462 residues: Siroheme synthase (462 aa).

The precorrin-2 dehydrogenase /sirohydrochlorin ferrochelatase stretch occupies residues 1-203 (MQYFPIFVDT…GNNSKAEQMM (203 aa)). NAD(+)-binding positions include 22–23 (EV) and 43–44 (PW). Ser-128 is modified (phosphoserine). The segment at 217-462 (GEVYLVGAGP…EKLNWFGADA (246 aa)) is uroporphyrinogen-III C-methyltransferase. Pro-226 provides a ligand contact to S-adenosyl-L-methionine. Residue Asp-249 is the Proton acceptor of the active site. Lys-271 acts as the Proton donor in catalysis. Residues 302 to 304 (GGD), Ile-307, 332 to 333 (TA), Met-384, and Ala-413 contribute to the S-adenosyl-L-methionine site.

It in the N-terminal section; belongs to the precorrin-2 dehydrogenase / sirohydrochlorin ferrochelatase family. In the C-terminal section; belongs to the precorrin methyltransferase family.

The catalysed reaction is uroporphyrinogen III + 2 S-adenosyl-L-methionine = precorrin-2 + 2 S-adenosyl-L-homocysteine + H(+). The enzyme catalyses precorrin-2 + NAD(+) = sirohydrochlorin + NADH + 2 H(+). It catalyses the reaction siroheme + 2 H(+) = sirohydrochlorin + Fe(2+). The protein operates within cofactor biosynthesis; adenosylcobalamin biosynthesis; precorrin-2 from uroporphyrinogen III: step 1/1. Its pathway is cofactor biosynthesis; adenosylcobalamin biosynthesis; sirohydrochlorin from precorrin-2: step 1/1. It functions in the pathway porphyrin-containing compound metabolism; siroheme biosynthesis; precorrin-2 from uroporphyrinogen III: step 1/1. It participates in porphyrin-containing compound metabolism; siroheme biosynthesis; siroheme from sirohydrochlorin: step 1/1. The protein operates within porphyrin-containing compound metabolism; siroheme biosynthesis; sirohydrochlorin from precorrin-2: step 1/1. Its function is as follows. Multifunctional enzyme that catalyzes the SAM-dependent methylations of uroporphyrinogen III at position C-2 and C-7 to form precorrin-2 via precorrin-1. Then it catalyzes the NAD-dependent ring dehydrogenation of precorrin-2 to yield sirohydrochlorin. Finally, it catalyzes the ferrochelation of sirohydrochlorin to yield siroheme. The chain is Siroheme synthase from Pseudoalteromonas atlantica (strain T6c / ATCC BAA-1087).